The chain runs to 272 residues: Shikimate dehydrogenase (NADP(+)) (272 aa).

Residues 14-16 and Thr61 each bind shikimate; that span reads SLS. Lys65 serves as the catalytic Proton acceptor. Asp102 is a shikimate binding site. NADP(+) is bound by residues 127-131, 151-156, and Leu215; these read GAGGA and NRTPSK. Shikimate is bound at residue Tyr217. An NADP(+)-binding site is contributed by Gly239.

This sequence belongs to the shikimate dehydrogenase family. As to quaternary structure, homodimer.

The catalysed reaction is shikimate + NADP(+) = 3-dehydroshikimate + NADPH + H(+). Its pathway is metabolic intermediate biosynthesis; chorismate biosynthesis; chorismate from D-erythrose 4-phosphate and phosphoenolpyruvate: step 4/7. Its function is as follows. Involved in the biosynthesis of the chorismate, which leads to the biosynthesis of aromatic amino acids. Catalyzes the reversible NADPH linked reduction of 3-dehydroshikimate (DHSA) to yield shikimate (SA). The sequence is that of Shikimate dehydrogenase (NADP(+)) from Coxiella burnetii (strain CbuG_Q212) (Coxiella burnetii (strain Q212)).